A 221-amino-acid chain; its full sequence is Oligoribonuclease (221 aa).

An Exonuclease domain is found at leucine 21 to leucine 186. Tyrosine 143 is an active-site residue.

Belongs to the oligoribonuclease family.

It is found in the cytoplasm. In terms of biological role, 3'-to-5' exoribonuclease specific for small oligoribonucleotides. This Corynebacterium efficiens (strain DSM 44549 / YS-314 / AJ 12310 / JCM 11189 / NBRC 100395) protein is Oligoribonuclease.